The following is a 372-amino-acid chain: 3 beta-hydroxysteroid dehydrogenase/Delta 5--&gt;4-isomerase type 2 (372 aa).

The active-site Proton acceptor is the Y154. K158 lines the NAD(+) pocket. A helical transmembrane segment spans residues L287 to I307.

The protein belongs to the 3-beta-HSD family. In terms of tissue distribution, expressed in adrenal gland, testis and ovary.

It localises to the endoplasmic reticulum membrane. It is found in the mitochondrion membrane. The enzyme catalyses a 3beta-hydroxy-Delta(5)-steroid + NAD(+) = a 3-oxo-Delta(5)-steroid + NADH + H(+). It carries out the reaction a 3-oxo-Delta(5)-steroid = a 3-oxo-Delta(4)-steroid. It catalyses the reaction pregnenolone + NAD(+) = pregn-5-ene-3,20-dione + NADH + H(+). The catalysed reaction is pregn-5-ene-3,20-dione = progesterone. The enzyme catalyses 3beta-hydroxyandrost-5-en-17-one + NAD(+) = androst-5-ene-3,17-dione + NADH + H(+). It carries out the reaction androst-5-ene-3,17-dione = androst-4-ene-3,17-dione. Its pathway is lipid metabolism; steroid biosynthesis. 3-beta-HSD is a bifunctional enzyme, that catalyzes the oxidative conversion of Delta(5)-ene-3-beta-hydroxy steroid, and the oxidative conversion of ketosteroids. The 3-beta-HSD enzymatic system plays a crucial role in the biosynthesis of all classes of hormonal steroids. This chain is 3 beta-hydroxysteroid dehydrogenase/Delta 5--&gt;4-isomerase type 2, found in Homo sapiens (Human).